We begin with the raw amino-acid sequence, 411 residues long: MKPSHKSCEAAPLLPKMPETSTHNAPLNLSFPSVPSYQIGCSSLPEISRSTERALKEGKLPELVYGVKETVATLSQIPVSIFVTGDSGNGMSSFINALRIIGHEEDASAPTGVVRTTQTRAEYSSSHFPNVVLWDLPGLGATAQTVENYIEEMKFSTCDLFIIVASEQFSSNHVKLAKIIQSMGKRFYVIWTKLDRDLSTSVLSEVRLIQNIQENIRENLQKEGVKEVPIFLVSNLDPLLHDFPELRNTLQTDLSNIRCCEPLKTLYVIYEKIIGDKVANWNQIIANGRLKSSLGVRDDDDMGECLKRYRLIFGIDDESLQQIAHGMGTVVMEYKANIKSQDFHTLRRADWKLRLMTCTTVNALFCLFKFLPCLCHCFKRMRHKRMLLLVAKDTKNILKKILMDAVSPPQI.

The segment at 1–21 (MKPSHKSCEAAPLLPKMPETS) is disordered. The region spanning 77–253 (IPVSIFVTGD…PELRNTLQTD (177 aa)) is the IRG-type G domain. Residues 86 to 93 (DSGNGMSS), 111 to 115 (TGVVR), and 193 to 195 (KLD) each bind GTP. Ser204 carries the post-translational modification Phosphoserine. Position 234–236 (234–236 (SNL)) interacts with GTP. Lys272 participates in a covalent cross-link: Glycyl lysine isopeptide (Lys-Gly) (interchain with G-Cter in ubiquitin). An alpha-K amphipathic helix region spans residues 352 to 376 (KLRLMTCTTVNALFCLFKFLPCLCH).

It belongs to the TRAFAC class dynamin-like GTPase superfamily. IRG family. In terms of assembly, interacts with ULK1; promoting the coassembly of ULK1 and BECN1. Interacts with BECN1; enhancing BECN1-interacting partners and influencing the composition of the BECN1 complex. Interacts with ATG16L1. Interacts with NOD2; promoting Irgm 'Lys-63'-linked polyubiquitination, which is required for interactions with the core autophagy factors. Interacts with STX17; promoting STX17 recruitment to autophagosomes. Interacts with ATG8 proteins (GABARAP, GABARAPL1, GABARAPL2, MAP1LC3A, MAP1LC3B and MAP1LC3C); promoting STX17 recruitment to autophagosomes. Interacts with TFEB; promoting association between TFEB and PPP3CB and TFEB dephosphorylation. Interacts with PPP3CB; promoting association between TFEB and PPP3CB and TFEB dephosphorylation. Interacts with NLRP3; preventing NLRP3 inflammasome assembly and promoting SQSTM1/p62-dependent autophagic degradation of NLRP3. Interacts with CGAS; promoting SQSTM1/p62-dependent autophagic degradation of CGAS. Interacts with RIGI/RIG-I; promoting SQSTM1/p62-dependent autophagic degradation of RIGI/RIG-I. Interacts with NOD1; promoting SQSTM1/p62-dependent autophagic degradation of RIGI/RIG-I. Interacts with NOD2; promoting SQSTM1/p62-dependent autophagic degradation of RIGI/RIG-I. Interacts with RIPK2; promoting SQSTM1/p62-dependent autophagic degradation of RIGI/RIG-I. Interacts with PIK3CA. Palmitoylated on C-terminal Cys residues. Palmitoylation, together with the alpha-K amphipathic helix, which binds phosphatidylinositol, mediate binding to membranes. Post-translationally, ubiquitinated via 'Lys-63'-linked polyubiquitination in a NOD2-dependent process. 'Lys-63'-linked polyubiquitination is required for interactions with the core autophagy factors. Ubiquitination at Lys-272 by the DCX(WDR77) complex, also named CLR4(WDR77) complex, in intestinal cells, leading to its degradation by the proteasome.

It is found in the golgi apparatus membrane. It localises to the cell membrane. The protein localises to the cytoplasmic vesicle. The protein resides in the phagosome membrane. Its subcellular location is the autophagosome membrane. It is found in the lysosome membrane. It localises to the late endosome membrane. The protein localises to the mitochondrion membrane. The protein resides in the cell projection. Its subcellular location is the phagocytic cup. The catalysed reaction is GTP + H2O = GDP + phosphate + H(+). In terms of biological role, immunity-related GTPase that plays important roles in innate immunity and inflammatory response. Acts as a dynamin-like protein that binds to intracellular membranes and promotes remodeling and trafficking of those membranes. Required for clearance of acute protozoan and bacterial infections by interacting with autophagy and lysosome regulatory proteins, thereby promoting the fusion of phagosomes with lysosomes for efficient degradation of cargo including microbes. Regulates selective autophagy, including xenophagy and mitophagy, both directly and indirectly. Directly regulates autophagy by acting as a molecular adapter that promotes the coassembly of the core autophagy machinery to mediate antimicrobial defense: Irgm (1) activates AMPK, which in turn phosphorylates ULK1 and BECN1 to induce autophagy, (2) promotes the coassembly of ULK1 and BECN1, enhancing BECN1-interacting partners and (3) influences the composition of the BECN1 complex, by competing with the negative regulators BCL2 and RUBCN, to trigger autophagy. Also activates autophagy by promoting recruitment of STX17 to autophagosomes. In collaboration with ATG8 proteins, regulate lysosomal biogenesis, a fundamental process for any autophagic pathway, by promoting TFEB dephosphorylation. Also modulates autophagy by assisting with autophagosome formation and preventing lysosomal deacidification. Regulates autophagy by affecting mitochondrial fusion and fission. Also involved in M1 macrophage activation for the production of proinflammatory cytokines. While activating autophagy, acts as a key negative regulator of the inflammatory and interferon responses both by (1) promoting mitophagy and (2) mediating autophagy-dependent degradation of effectors of the inflammatory response. Promotes degradation of damaged and IFNG/IFN-gamma-stressed mitochondria via mitophagy, preventing cytosolic release of ligands that activate inflammation. Negatively regulates interferon-signaling in hematopoietic stem cells, preserving hematopoietic stem cell number and function. Promotes expansion of activated CD4(+) T-cells by inhibiting IFNG/IFN-gamma signaling, thereby preventing Ifng-mediated cell death of CD4(+) T-cells. Acts as a suppressor of inflammation by promoting recruitment of inflammation effectors, such as CGAS, RIGI/RIG-I and NLRP3, to autophagosome membranes, leading to their SQSTM1/p62-dependent autophagic degradation. Also directly inhibits assembly of the NLRP3 inflammasome by preventing the association between NLRP3 and PYCARD. Acts as a negative regulator of antiviral innate immune response by suppressing the RIPK2-dependent pro-inflammatory response: mediates recruitment of RIPosomes, composed of RIPK2 and NOD1 or NOD2, to autophagosome membranes, promoting their SQSTM1/p62-dependent autophagic degradation. The protein is Immunity-related GTPase family M protein of Rattus norvegicus (Rat).